The following is a 1013-amino-acid chain: Ephrin type-A receptor 5 (1013 aa).

Residues 1–31 (MGLRGGGGRAGGPAPGWTCLLLCAALRSLLA) form the signal peptide. At 32–549 (SPGSEVNLLD…AASSDQSQIP (518 aa)) the chain is on the extracellular side. Residues 36–214 (EVNLLDSRTV…YYKKCPSVIR (179 aa)) form the Eph LBD domain. Residues Asn240, Asn275, Asn345, Asn399, Asn412, and Asn437 are each glycosylated (N-linked (GlcNAc...) asparagine). Fibronectin type-III domains are found at residues 333-443 (PPSA…TNQA) and 444-538 (APSP…TSPV). Residues 550–570 (IIVVSVTVGVILLAVVIGFLL) traverse the membrane as a helical segment. The Cytoplasmic segment spans residues 571-1013 (SGSCCDHGCG…VQLVNGMVPL (443 aa)). Residues Tyr626 and Tyr632 each carry the phosphotyrosine; by autocatalysis modification. Residues 651–912 (ITIERVIGAG…EIVSMLDKLI (262 aa)) form the Protein kinase domain. Residues 657 to 665 (IGAGEFGEV) and Lys683 contribute to the ATP site. Catalysis depends on Asp776, which acts as the Proton acceptor. A phosphotyrosine; by autocatalysis mark is found at Tyr809 and Tyr958. In terms of domain architecture, SAM spans 941 to 1013 (GAYRSVGEWL…VQLVNGMVPL (73 aa)). Residues 1011-1013 (VPL) carry the PDZ-binding motif.

Belongs to the protein kinase superfamily. Tyr protein kinase family. Ephrin receptor subfamily. As to quaternary structure, heterotetramer upon binding of the ligand. The heterotetramer is composed of an ephrin dimer and a receptor dimer. Oligomerization is probably required to induce biological responses. Phosphorylated. Phosphorylation is stimulated by the ligand EFNA5. Detected in the 10-day embryonic brain, weaker expression in the rest of the 10-day embryo. Undetected in adult tissues.

The protein resides in the cell membrane. Its subcellular location is the cell projection. The protein localises to the axon. It is found in the dendrite. The enzyme catalyses L-tyrosyl-[protein] + ATP = O-phospho-L-tyrosyl-[protein] + ADP + H(+). Its function is as follows. Receptor tyrosine kinase which binds promiscuously GPI-anchored ephrin-A family ligands residing on adjacent cells, leading to contact-dependent bidirectional signaling into neighboring cells. The signaling pathway downstream of the receptor is referred to as forward signaling while the signaling pathway downstream of the ephrin ligand is referred to as reverse signaling. Among GPI-anchored ephrin-A ligands, EFNA5 most probably constitutes the cognate/functional ligand for EPHA5. Functions as an axon guidance molecule during development and may be involved in the development of the retinotectal, entorhino-hippocampal and hippocamposeptal pathways. Together with EFNA5 plays also a role in synaptic plasticity in adult brain through regulation of synaptogenesis. The polypeptide is Ephrin type-A receptor 5 (EPHA5) (Gallus gallus (Chicken)).